Consider the following 652-residue polypeptide: Aorsin (652 aa).

The signal sequence occupies residues 1–22 (MRPLSHLSFFNGLLLGLSALSA). A propeptide spans 23–215 (ATSVVHERRE…PRPIQQHDVK (193 aa)) (removed in mature form). The N-linked (GlcNAc...) asparagine glycan is linked to N112. A disordered region spans residues 177-211 (VNLNPSSGKPSSIRRRAAASKKTKLPARGPRPIQQ). A compositionally biased stretch (basic residues) spans 188–201 (SIRRRAAASKKTKL). N218 and N247 each carry an N-linked (GlcNAc...) asparagine glycan. Residues 225-651 (LITPECIRAL…PKMLKLWLDL (427 aa)) enclose the Peptidase S53 domain. Active-site charge relay system residues include E301 and D305. Residues N331 and N445 are each glycosylated (N-linked (GlcNAc...) asparagine). The active-site Charge relay system is S569. The Ca(2+) site is built by D610 and I611. N613 carries an N-linked (GlcNAc...) asparagine glycan. The Ca(2+) site is built by G629 and D631.

It depends on Ca(2+) as a cofactor. N-glycosylated. Post-translationally, O-glycosylated.

It is found in the secreted. The protein resides in the extracellular space. Its activity is regulated as follows. Inhibited by antipain and leupeptin. Functionally, serine endopeptidase which hydrolyzes a range of fluorogenic peptide substrates containing the basic residues arginine or lysine at the P1 position and prefers paired basic resides. Also hydrolyzes clupeine and salmine, activates plasminogen and converts trypsinogen to trypsin. The sequence is that of Aorsin from Aspergillus oryzae (strain ATCC 42149 / RIB 40) (Yellow koji mold).